The following is a 117-amino-acid chain: MALYEHIFIVRPDVSPAQMESLLEETKALIEEKGGKTGKIEYWGLRNLSYRINKSRKGHYGLIDIDAEADVINELERLQRLSEDVIRHMTLRVEAHTEEPSAILTKKDDRRGRRERN.

The interval Thr-97 to Asn-117 is disordered.

Belongs to the bacterial ribosomal protein bS6 family.

Functionally, binds together with bS18 to 16S ribosomal RNA. The polypeptide is Small ribosomal subunit protein bS6 (Maricaulis maris (strain MCS10) (Caulobacter maris)).